Here is an 83-residue protein sequence, read N- to C-terminus: Cytotoxin A5 (83 aa).

An N-terminal signal peptide occupies residues 1-21 (MKTLLLTMVVVTIVCLDLGYT). Intrachain disulfides connect Cys24/Cys43, Cys36/Cys61, Cys65/Cys76, and Cys77/Cys82.

It belongs to the three-finger toxin family. Short-chain subfamily. Orphan group XV sub-subfamily. As to expression, expressed by the venom gland.

The protein localises to the secreted. It is found in the target cell membrane. Non-cytotoxic protein that does not show lytic and hemolytic activities, but can induce aggregation and fusion of sphingomyelin vesicles. It binds to integrin alpha-V/beta-3 (ITGAV/ITGB3) with high affinity, and it inhibits osteoclast differentiation and bone resorption in mice, probably due to binding to integrin alpha-V/beta-3. This Naja atra (Chinese cobra) protein is Cytotoxin A5.